A 327-amino-acid chain; its full sequence is Cell surface glycoprotein CD200 receptor 1 (327 aa).

An N-terminal signal peptide occupies residues 1 to 23 (MLCFWRTSHVAVLLIWGVFAAES). Residues 24–239 (SCPDKNQTMQ…GRGGDQLLGS (216 aa)) lie on the Extracellular side of the membrane. The region spanning 26 to 145 (PDKNQTMQNN…GNFQNIYDLQ (120 aa)) is the Ig-like V-type domain. Residues asparagine 29, asparagine 34, asparagine 43, asparagine 96, asparagine 159, asparagine 187, asparagine 192, and asparagine 222 are each glycosylated (N-linked (GlcNAc...) asparagine). 2 disulfide bridges follow: cysteine 58–cysteine 129 and cysteine 81–cysteine 97. One can recognise an Ig-like C2-type domain in the interval 147–226 (LVPPEVTHFP…HLTTGNQSLS (80 aa)). 2 disulfide bridges follow: cysteine 164-cysteine 213 and cysteine 183-cysteine 201. A helical transmembrane segment spans residues 240–260 (YIQYIIPSIIILIIIGCICLL). The Cytoplasmic segment spans residues 261–327 (KISGCRKCKL…DCLTLSAMGI (67 aa)).

Belongs to the CD200R family. As to quaternary structure, CD200 and CD200R1 interact via their respective N-terminal Ig-like domains. In terms of processing, phosphorylated on tyrosine residues. Highly N-glycosylated. Restricted to cells of the myeloid lineage.

Its subcellular location is the cell membrane. Its function is as follows. Inhibitory receptor for the CD200/OX2 cell surface glycoprotein. Limits inflammation by inhibiting the expression of pro-inflammatory molecules including TNF-alpha, interferons, and inducible nitric oxide synthase (iNOS) in response to selected stimuli. The polypeptide is Cell surface glycoprotein CD200 receptor 1 (Cd200r1) (Rattus norvegicus (Rat)).